A 613-amino-acid polypeptide reads, in one-letter code: Portal protein (613 aa).

The interval 577-613 (ATGGDHGIRQAPSARGDAEPDHAKSKPARDPPPGAGS) is disordered. A compositionally biased stretch (basic and acidic residues) spans 592 to 605 (GDAEPDHAKSKPAR).

The protein belongs to the herpesviridae portal protein family. Homododecamerizes. Interacts with terminase subunits TRM1 and TRM3.

The protein localises to the virion. The protein resides in the host nucleus. Forms a portal in the viral capsid through which viral DNA is translocated during DNA packaging. Assembles as a dodecamer at a single fivefold axe of the T=16 icosahedric capsid. Binds to the molecular motor that translocates the viral DNA, termed terminase. The polypeptide is Portal protein (Homo sapiens (Human)).